The chain runs to 778 residues: Ent-sandaracopimaradiene synthase KSL3, chloroplastic (778 aa).

A chloroplast-targeting transit peptide spans 1–35; that stretch reads MLLTSTNTLKISSQRKEWEAKDLTGMFHGQVNGRV. 5 residues coordinate Mg(2+): D527, E531, N670, D671, and D678. Positions 527–531 match the DDXXD motif motif; the sequence is DDFFE.

The protein belongs to the terpene synthase family. Requires Mg(2+) as cofactor.

The protein resides in the plastid. The protein localises to the chloroplast. The catalysed reaction is ent-copalyl diphosphate = ent-sandaracopimara-8(14),15-diene + diphosphate. The enzyme catalyses ent-copalyl diphosphate = ent-(12E)-labda-8(17),12,14-triene + diphosphate. Its pathway is secondary metabolite biosynthesis; terpenoid biosynthesis. In terms of biological role, diterpene cyclase involved in the biosynthesis of labdane-related diterpenoids (LRDs) natural products. Catalyzes the cyclization of ent-CDP into ent-sandaracopimaradiene as a major, and ent-pimaradiene and ent-labdatriene as minor products. The polypeptide is Ent-sandaracopimaradiene synthase KSL3, chloroplastic (Ricinus communis (Castor bean)).